The following is a 467-amino-acid chain: Zinc finger and BTB domain-containing protein 43 (467 aa).

Methionine 1 is subject to N-acetylmethionine. The BTB domain maps to 33–97 (CDVSIVVQGH…SYTGRLVMPA (65 aa)). Disordered stretches follow at residues 134–153 (LNHG…GLVE) and 162–227 (HTDF…EFHY). A compositionally biased stretch (polar residues) spans 140 to 149 (HQSPSSSNYN). Basic and acidic residues-rich tracts occupy residues 164–174 (DFPKAQELRDG) and 182–194 (KDEL…EHEY). Glycyl lysine isopeptide (Lys-Gly) (interchain with G-Cter in SUMO2) cross-links involve residues lysine 182, lysine 247, lysine 297, and lysine 358. A C2H2-type 1; atypical zinc finger spans residues 373-394 (YPCQCGKSFTHKSQRDRHMSMH). Residues 400 to 422 (YGCSVCGKKFKMKHHLVGHMKIH) form a C2H2-type 2 zinc finger. Threonine 423 carries the phosphothreonine modification. A C2H2-type 3; atypical zinc finger spans residues 428-450 (YECNICAKRFMWRDSFHRHVTSC). Lysine 458 participates in a covalent cross-link: Glycyl lysine isopeptide (Lys-Gly) (interchain with G-Cter in SUMO2).

It belongs to the krueppel C2H2-type zinc-finger protein family. Interacts with BDP1.

The protein resides in the nucleus. Functionally, may be involved in transcriptional regulation. This chain is Zinc finger and BTB domain-containing protein 43 (Zbtb43), found in Mus musculus (Mouse).